The sequence spans 157 residues: Ribosome-binding factor A (157 aa).

Residues 124-157 are disordered; the sequence is SAGAQFAGDADPYRKPESDDESDTAAKTDGDAAE. Over residues 147 to 157 the composition is skewed to basic and acidic residues; sequence TAAKTDGDAAE.

The protein belongs to the RbfA family. Monomer. Binds 30S ribosomal subunits, but not 50S ribosomal subunits or 70S ribosomes.

The protein resides in the cytoplasm. One of several proteins that assist in the late maturation steps of the functional core of the 30S ribosomal subunit. Associates with free 30S ribosomal subunits (but not with 30S subunits that are part of 70S ribosomes or polysomes). Required for efficient processing of 16S rRNA. May interact with the 5'-terminal helix region of 16S rRNA. The chain is Ribosome-binding factor A from Streptomyces avermitilis (strain ATCC 31267 / DSM 46492 / JCM 5070 / NBRC 14893 / NCIMB 12804 / NRRL 8165 / MA-4680).